A 414-amino-acid chain; its full sequence is Transforming growth factor beta-2 proprotein (414 aa).

An N-terminal signal peptide occupies residues 1–19 (MHYCVLSAFLILHLVTVAL). 3 N-linked (GlcNAc...) asparagine glycosylation sites follow: Asn72, Asn140, and Asn241. 4 disulfide bridges follow: Cys309–Cys318, Cys317–Cys380, Cys346–Cys411, and Cys350–Cys413.

The protein belongs to the TGF-beta family. As to quaternary structure, interacts with the serine proteases, HTRA1 and HTRA3. Interacts with ASPN. Interacts with MFAP5. In terms of assembly, interacts with Transforming growth factor beta-2 (TGF-beta-2) chain; interaction is non-covalent and maintains (TGF-beta-2) in a latent state. Interacts with LRRC32/GARP; leading to regulate activation of TGF-beta-2. Interacts with NREP; the interaction results in a decrease in TGFB2 autoinduction. Transforming growth factor beta-2: Homodimer; disulfide-linked. Transforming growth factor beta-2: Interacts with TGF-beta receptors (TGFBR1 and TGFBR2), leading to signal transduction. The precursor proprotein is cleaved in the Golgi apparatus to form Transforming growth factor beta-2 (TGF-beta-2) and Latency-associated peptide (LAP) chains, which remain non-covalently linked, rendering TGF-beta-2 inactive.

It is found in the secreted. Its subcellular location is the extracellular space. The protein localises to the extracellular matrix. Functionally, precursor of the Latency-associated peptide (LAP) and Transforming growth factor beta-2 (TGF-beta-2) chains, which constitute the regulatory and active subunit of TGF-beta-2, respectively. Its function is as follows. Required to maintain the Transforming growth factor beta-2 (TGF-beta-2) chain in a latent state during storage in extracellular matrix. Associates non-covalently with TGF-beta-2 and regulates its activation via interaction with 'milieu molecules', such as LTBP1 and LRRC32/GARP, that control activation of TGF-beta-2. In terms of biological role, multifunctional protein that regulates various processes such as angiogenesis and heart development. Activation into mature form follows different steps: following cleavage of the proprotein in the Golgi apparatus, Latency-associated peptide (LAP) and Transforming growth factor beta-2 (TGF-beta-2) chains remain non-covalently linked rendering TGF-beta-2 inactive during storage in extracellular matrix. At the same time, LAP chain interacts with 'milieu molecules', such as LTBP1 and LRRC32/GARP, that control activation of TGF-beta-2 and maintain it in a latent state during storage in extracellular milieus. Once activated following release of LAP, TGF-beta-2 acts by binding to TGF-beta receptors (TGFBR1 and TGFBR2), which transduce signal. The chain is Transforming growth factor beta-2 proprotein (TGFB2) from Chlorocebus aethiops (Green monkey).